The chain runs to 161 residues: Transcription antitermination protein NusB (161 aa).

This sequence belongs to the NusB family.

Involved in transcription antitermination. Required for transcription of ribosomal RNA (rRNA) genes. Binds specifically to the boxA antiterminator sequence of the ribosomal RNA (rrn) operons. In Nitrobacter winogradskyi (strain ATCC 25391 / DSM 10237 / CIP 104748 / NCIMB 11846 / Nb-255), this protein is Transcription antitermination protein NusB.